A 153-amino-acid polypeptide reads, in one-letter code: Aspartate carbamoyltransferase regulatory chain (153 aa).

Zn(2+) is bound by residues Cys-109, Cys-114, Cys-138, and Cys-141.

Belongs to the PyrI family. In terms of assembly, contains catalytic and regulatory chains. It depends on Zn(2+) as a cofactor.

Functionally, involved in allosteric regulation of aspartate carbamoyltransferase. This is Aspartate carbamoyltransferase regulatory chain from Vibrio parahaemolyticus serotype O3:K6 (strain RIMD 2210633).